Here is a 239-residue protein sequence, read N- to C-terminus: Transcriptional regulatory protein DcuR (239 aa).

The Response regulatory domain maps to 3–121 (NVLIIDDDAM…RFEEALTGWR (119 aa)). Asp-56 is subject to 4-aspartylphosphate. The segment at residues 181–200 (TDELANEVNISRVSCRKYLI) is a DNA-binding region (H-T-H motif).

Phosphorylated and activated by DcuS.

It localises to the cytoplasm. Functionally, member of the two-component regulatory system DcuR/DcuS. Involved in the C4-dicarboxylate-stimulated regulation of the genes encoding the anaerobic fumarate respiratory system (frdABCD; nuoAN; dcuB; dcuC; sdhCDAB; etc.). Weakly regulates the aerobic C4-dicarboxylate transporter dctA. This chain is Transcriptional regulatory protein DcuR (dcuR), found in Escherichia coli O157:H7.